The chain runs to 342 residues: Aquaporin-8 (342 aa).

The next 3 membrane-spanning stretches (helical) occupy residues 55 to 75, 98 to 118, and 126 to 146; these read FLAVFVLMVFIEGSAATAIFT, VAGGVSGAFLNPAVALAFAVL, and CIFYMISQYLAAFVASCTMFA. The short motif at 108–110 is the NPA 1 element; sequence NPA. An N-linked (GlcNAc...) asparagine glycan is attached at Asn166. 2 consecutive transmembrane segments (helical) span residues 184-204 and 215-235; these read TAFADQVFCTAILLIVVLAMC and FLPIAIGLLIITISCTLSYNA. Positions 240–242 match the NPA 2 motif; sequence NPS. The helical transmembrane segment at 266–286 threads the bilayer; that stretch reads YTWFFVPVLGSHCGAIIGGAI. Polar residues predominate over residues 302–327; that stretch reads TNSVSSMSYNEDNSTLTKRKQVSNIV. The segment at 302-342 is disordered; it reads TNSVSSMSYNEDNSTLTKRKQVSNIVHDSKGAKGSSTAPVN. An N-linked (GlcNAc...) asparagine glycan is attached at Asn314.

The protein belongs to the MIP/aquaporin (TC 1.A.8) family.

The protein resides in the cell membrane. Aquaglyceroporin that may modulate the water content and osmolytes during anhydrobiosis. In Milnesium tardigradum (Water bear), this protein is Aquaporin-8.